The following is a 486-amino-acid chain: GTPase Obg (486 aa).

An Obg domain is found at 2–159 (SRFIDRVVLH…RELVLELKSV (158 aa)). The OBG-type G domain occupies 160–340 (ADVGLVGFPS…LTFALAKLVA (181 aa)). Residues 166 to 173 (GFPSAGKS), 191 to 195 (FTTLV), 212 to 215 (DVPG), 292 to 295 (NKAD), and 321 to 323 (SAV) each bind GTP. Mg(2+) is bound by residues Ser173 and Thr193. An OCT domain is found at 358 to 438 (PVISNENSFS…IGNVSFDWEP (81 aa)). The tract at residues 462-486 (RIGATERKHASRIRRGLEGLDPEDQ) is disordered.

The protein belongs to the TRAFAC class OBG-HflX-like GTPase superfamily. OBG GTPase family. In terms of assembly, monomer. The cofactor is Mg(2+).

The protein resides in the cytoplasm. An essential GTPase which binds GTP, GDP and possibly (p)ppGpp with moderate affinity, with high nucleotide exchange rates and a fairly low GTP hydrolysis rate. Plays a role in control of the cell cycle, stress response, ribosome biogenesis and in those bacteria that undergo differentiation, in morphogenesis control. This Rhodococcus jostii (strain RHA1) protein is GTPase Obg.